Consider the following 98-residue polypeptide: UPF0390 protein zgc136864 (98 aa).

Over residues 1–30 the composition is skewed to basic residues; sequence MAQGKQKFKAQRPGGAKKHQNKPKGLKKGG. Disordered stretches follow at residues 1–38 and 63–98; these read MAQG…PKKA and TQKA…GPSK. A compositionally biased stretch (low complexity) spans 83-98; it reads KSGTAGAPKPAAGPSK.

The protein belongs to the UPF0390 family.

This Danio rerio (Zebrafish) protein is UPF0390 protein zgc136864.